The sequence spans 185 residues: Prorelaxin H1 (185 aa).

The signal sequence occupies residues 1-22; that stretch reads MPRLFLFHLLEFCLLLNQFSRA. 3 disulfide bridges follow: Cys35–Cys172, Cys47–Cys185, and Cys171–Cys176. A propeptide spans 56–158 (connecting peptide); sequence SLSQEDAPQT…KYLGLDTHSQ (103 aa).

Belongs to the insulin family. As to quaternary structure, heterodimer of a B chain and an A chain linked by two disulfide bonds. Prostate. Not expressed in placenta, decidua or ovary.

It localises to the secreted. Functionally, relaxin is an ovarian hormone that acts with estrogen to produce dilatation of the birth canal in many mammals. May be involved in remodeling of connective tissues during pregnancy, promoting growth of pubic ligaments and ripening of the cervix. The protein is Prorelaxin H1 (RLN1) of Homo sapiens (Human).